Consider the following 380-residue polypeptide: Cytochrome b (380 aa).

4 consecutive transmembrane segments (helical) span residues 33-53, 77-98, 113-133, and 178-198; these read FGSL…FLAM, WMIR…FLHI, WNIG…GYVL, and FFTL…LHLL. His-83 and His-97 together coordinate heme b. Heme b contacts are provided by His-182 and His-196. Residue His-201 coordinates a ubiquinone. The next 4 membrane-spanning stretches (helical) occupy residues 226-246, 288-308, 320-340, and 347-367; these read IKDI…TLLS, LGGV…PALH, LSQF…WIGG, and FITI…LLMP.

This sequence belongs to the cytochrome b family. In terms of assembly, the cytochrome bc1 complex contains 11 subunits: 3 respiratory subunits (MT-CYB, CYC1 and UQCRFS1), 2 core proteins (UQCRC1 and UQCRC2) and 6 low-molecular weight proteins (UQCRH/QCR6, UQCRB/QCR7, UQCRQ/QCR8, UQCR10/QCR9, UQCR11/QCR10 and a cleavage product of UQCRFS1). This cytochrome bc1 complex then forms a dimer. Heme b serves as cofactor.

It is found in the mitochondrion inner membrane. Component of the ubiquinol-cytochrome c reductase complex (complex III or cytochrome b-c1 complex) that is part of the mitochondrial respiratory chain. The b-c1 complex mediates electron transfer from ubiquinol to cytochrome c. Contributes to the generation of a proton gradient across the mitochondrial membrane that is then used for ATP synthesis. This is Cytochrome b (MT-CYB) from Pongo abelii (Sumatran orangutan).